A 472-amino-acid chain; its full sequence is WASH complex subunit 1 (472 aa).

Residues 1-51 (MPQNRSMESQAYSLPLILPDLRREEAIHQITDTLQHLQTVSNDIFSRILQR) are required for WASH complex assembly. Disordered stretches follow at residues 289–365 (ENSR…SDGR), 377–412 (GIGK…GDLM), and 426–472 (ISGK…DWES). 2 stretches are compositionally biased toward pro residues: residues 301 to 319 (LPPP…PPEP) and 327 to 336 (SLAPPLPIPA). Residues 352–472 (QGAPKEVVNP…GDGDEEDWES (121 aa)) are VCA. The 23-residue stretch at 364-386 (GRASLLESIRQAGGIGKAKLRNV) folds into the WH2 domain. Positions 385–401 (NVKEKKLEKKKMKEQEQ) are enriched in basic and acidic residues.

The protein belongs to the WASH1 family. As to quaternary structure, component of the WASH complex.

Its subcellular location is the early endosome membrane. The protein resides in the recycling endosome membrane. In terms of biological role, acts as a nucleation-promoting factor at the surface of endosomes, where it recruits and activates the Arp2/3 complex to induce actin polymerization, playing a key role in the fission of tubules that serve as transport intermediates during endosome sorting. The sequence is that of WASH complex subunit 1 from Xenopus tropicalis (Western clawed frog).